Here is a 320-residue protein sequence, read N- to C-terminus: Malate dehydrogenase (320 aa).

NAD(+) is bound by residues 8 to 13 (GAGQIG) and Asp33. Substrate-binding residues include Arg82 and Arg88. Residues Asn95 and 118–120 (ITN) contribute to the NAD(+) site. Residues Asn120 and Arg151 each coordinate substrate. His175 (proton acceptor) is an active-site residue.

Belongs to the LDH/MDH superfamily. MDH type 3 family.

The catalysed reaction is (S)-malate + NAD(+) = oxaloacetate + NADH + H(+). In terms of biological role, catalyzes the reversible oxidation of malate to oxaloacetate. This Pelagibacter ubique (strain HTCC1062) protein is Malate dehydrogenase.